The following is a 428-amino-acid chain: ATP-dependent RNA helicase RhlB (428 aa).

Residues 9-37 (KKFSDFALHPKVIEALDNKGFSNCTPIQA) carry the Q motif motif. The 180-residue stretch at 40–219 (LPFTVEGRDV…FEQMNHAEYI (180 aa)) folds into the Helicase ATP-binding domain. 53-60 (AQTGTGKT) lines the ATP pocket. The short motif at 165–168 (DEAD) is the DEAD box element. A Helicase C-terminal domain is found at 245 to 390 (RLLQTLLEEE…VSKYNSQALL (146 aa)). Positions 392 to 428 (DLPAPKRRYRSRSGNHQRRNNLSHRNNTPRNNRKRSG) are disordered. Positions 396-413 (PKRRYRSRSGNHQRRNNL) are enriched in basic residues.

It belongs to the DEAD box helicase family. RhlB subfamily. As to quaternary structure, component of the RNA degradosome, which is a multiprotein complex involved in RNA processing and mRNA degradation.

It localises to the cytoplasm. It carries out the reaction ATP + H2O = ADP + phosphate + H(+). Its function is as follows. DEAD-box RNA helicase involved in RNA degradation. Has RNA-dependent ATPase activity and unwinds double-stranded RNA. The sequence is that of ATP-dependent RNA helicase RhlB from Photorhabdus laumondii subsp. laumondii (strain DSM 15139 / CIP 105565 / TT01) (Photorhabdus luminescens subsp. laumondii).